Here is a 239-residue protein sequence, read N- to C-terminus: Phosphoribosylaminoimidazole-succinocarboxamide synthase (239 aa).

It belongs to the SAICAR synthetase family.

It catalyses the reaction 5-amino-1-(5-phospho-D-ribosyl)imidazole-4-carboxylate + L-aspartate + ATP = (2S)-2-[5-amino-1-(5-phospho-beta-D-ribosyl)imidazole-4-carboxamido]succinate + ADP + phosphate + 2 H(+). The protein operates within purine metabolism; IMP biosynthesis via de novo pathway; 5-amino-1-(5-phospho-D-ribosyl)imidazole-4-carboxamide from 5-amino-1-(5-phospho-D-ribosyl)imidazole-4-carboxylate: step 1/2. This chain is Phosphoribosylaminoimidazole-succinocarboxamide synthase, found in Bacillus cereus (strain G9842).